The chain runs to 284 residues: UPF0276 protein PA14_21580 (284 aa).

The protein belongs to the UPF0276 family.

The sequence is that of UPF0276 protein PA14_21580 from Pseudomonas aeruginosa (strain UCBPP-PA14).